The primary structure comprises 367 residues: Choline-phosphate cytidylyltransferase A (367 aa).

N-acetylmethionine is present on Met-1. The interval 1–33 (MDAQCSAKVNARKRRKEAPGPNGATEEDGVPSK) is disordered. Lys-8 is modified (N6-acetyllysine). Residues Ile-84, Phe-85, His-92, and Lys-122 each coordinate CTP. Phosphocholine is bound by residues Lys-122 and Trp-151. CTP contacts are provided by His-168, Asp-169, Tyr-173, Gln-195, Arg-196, Thr-197, and Ile-200. Amphipathic regions lie at residues 228–287 (KELN…EFIG) and 298–315 (ALKHMLKEGKGRMLQAIS). Residue Ser-233 is modified to Phosphoserine. Residues 272–293 (IDLIQKWEEKSREFIGSFLEMF) are autoinhibitory (AI). The segment at 313–367 (AISPKQSPSSSPTRERSPSPSFRWPFSGKTSPPCSPANLSRHKAAAYDISEDEED) is disordered. A phosphoserine mark is found at Ser-315, Ser-319, Ser-321, Ser-322, and Ser-323. Copy 1 of the repeat occupies 319 to 324 (SPSSSP). Low complexity predominate over residues 319–339 (SPSSSPTRERSPSPSFRWPFS). Thr-325 carries the phosphothreonine modification. Phosphoserine occurs at positions 329, 331, and 333. The 2; approximate repeat unit spans residues 329 to 333 (SPSPS). Thr-342 is modified (phosphothreonine). Phosphoserine occurs at positions 343, 347, 352, and 362. Repeat unit 3 spans residues 343–348 (SPPCSP).

The protein belongs to the cytidylyltransferase family. In terms of assembly, homodimer. In terms of processing, the serine residues of the C-terminus are phosphorylated. The inactive soluble form is stabilized by phosphorylation, the active membrane bound form is promoted by anionic lipids or diacylglycerol, and is stabilized by dephosphorylation. Post-translationally, monoubiquitinated by the SCF(FBXL2) complex, leading to proteasomal degradation. In terms of tissue distribution, brain, placenta, liver, fetal and adult lung.

Its subcellular location is the cytoplasm. The protein resides in the cytosol. It localises to the membrane. It is found in the endoplasmic reticulum membrane. The protein localises to the nucleus. The enzyme catalyses phosphocholine + CTP + H(+) = CDP-choline + diphosphate. Its pathway is phospholipid metabolism; phosphatidylcholine biosynthesis; phosphatidylcholine from phosphocholine: step 1/2. Its activity is regulated as follows. Interconverts between an inactive cytosolic form and an active membrane-bound form. Activation involves disruption of an inhibitory interaction between helices at the base of the active site and the autoinhibitory (AI) region. Activated by anionic lipid vesicles and by oleic acid or diacylglycerol-containing phosphatidylcholine vesicles. Functionally, catalyzes the key rate-limiting step in the CDP-choline pathway for phosphatidylcholine biosynthesis. The protein is Choline-phosphate cytidylyltransferase A (PCYT1A) of Homo sapiens (Human).